A 926-amino-acid chain; its full sequence is Tyrosine-protein phosphatase non-receptor type 4 (926 aa).

Residues 29–312 form the FERM domain; that stretch reads VVCNILLLDN…EHHTFFRLDR (284 aa). 3 disordered regions span residues 379-412, 429-474, and 492-511; these read SDDR…TRVR, SEDF…KKNS, and NESF…GGIP. Composition is skewed to polar residues over residues 398–408 and 432–455; these read NHRNSSFTQEA and FVSQ…PSQE. Residue Ser-474 is modified to Phosphoserine. In terms of domain architecture, PDZ spans 517–589; that stretch reads LIKMKPDENG…DQVVLFIKAS (73 aa). In terms of domain architecture, Tyrosine-protein phosphatase spans 655–911; the sequence is VLAQFDQLYR…RFVCEAILKV (257 aa). Residues Asp-820, 852 to 858, and Gln-896 each bind substrate; that span reads CSAGIGR. Cys-852 serves as the catalytic Phosphocysteine intermediate.

The protein belongs to the protein-tyrosine phosphatase family. Non-receptor class subfamily. In terms of tissue distribution, highly expressed in testis. Specifically expressed in spermatocytes and spermatids within seminiferous tubules (at protein level).

The protein resides in the cell membrane. Its subcellular location is the cytoplasm. It is found in the cytoskeleton. It carries out the reaction O-phospho-L-tyrosyl-[protein] + H2O = L-tyrosyl-[protein] + phosphate. Phosphatase that plays a role in immunity, learning, synaptic plasticity or cell homeostasis. Regulates neuronal cell homeostasis by protecting neurons against apoptosis. Negatively regulates TLR4-induced interferon beta production by dephosphorylating adapter TICAM2 and inhibiting subsequent TRAM-TRIF interaction. Dephosphorylates also the immunoreceptor tyrosine-based activation motifs/ITAMs of the TCR zeta subunit and thereby negatively regulates TCR-mediated signaling pathway. May act at junctions between the membrane and the cytoskeleton. This Mus musculus (Mouse) protein is Tyrosine-protein phosphatase non-receptor type 4 (Ptpn4).